The sequence spans 629 residues: tRNA uridine 5-carboxymethylaminomethyl modification enzyme MnmG (629 aa).

Residues 13 to 18 (GGGHAG), V125, and S180 each bind FAD. Residue 273 to 287 (GPRYCPSIEDKVMRF) participates in NAD(+) binding. Q370 is a binding site for FAD.

It belongs to the MnmG family. As to quaternary structure, homodimer. Heterotetramer of two MnmE and two MnmG subunits. FAD serves as cofactor.

Its subcellular location is the cytoplasm. Its function is as follows. NAD-binding protein involved in the addition of a carboxymethylaminomethyl (cmnm) group at the wobble position (U34) of certain tRNAs, forming tRNA-cmnm(5)s(2)U34. The polypeptide is tRNA uridine 5-carboxymethylaminomethyl modification enzyme MnmG (Sodalis glossinidius (strain morsitans)).